Reading from the N-terminus, the 571-residue chain is Coenzyme A biosynthesis protein 3 (571 aa).

2 disordered regions span residues 1–72 (MTDE…YKND) and 100–120 (INTS…PSLP). Positions 8 to 35 (SDQNMNGKQGVNLISSLPTTQVPVSILT) are enriched in polar residues. S42 is modified (phosphoserine). Residues 43-59 (IHDESNFERSDSHEDQS) show a composition bias toward basic and acidic residues. A compositionally biased stretch (polar residues) spans 60–72 (KSNSNRRNIYKND). Residues S116, S121, and S124 each carry the phosphoserine modification. Disordered stretches follow at residues 140–171 (ISNK…LQEQ) and 209–244 (IFKE…SMEK). Over residues 146-171 (KQQQQQEQLQQNQQQEEQQKAQLQEQ) the composition is skewed to low complexity. At S264 the chain carries Phosphoserine. The segment at 507–571 (RDEETGDKEQ…EDEEDVKTEV (65 aa)) is disordered. Residues 516-571 (QEQEEQEGADNEDDDDEDDEEDEEDEEEEEALNETASDESNDEEDEEDEEDVKTEV) show a composition bias toward acidic residues.

This sequence belongs to the HFCD (homooligomeric flavin containing Cys decarboxylase) superfamily. Component of the phosphopantothenoylcysteine decarboxylase (PPCDC) complex, a heterotrimer composed of CAB3, HAL3 and VHS3.

The protein resides in the cytoplasm. Component of the phosphopantothenoylcysteine decarboxylase (PPCDC) involved in the coenzyme A synthesis. This chain is Coenzyme A biosynthesis protein 3 (CAB3), found in Saccharomyces cerevisiae (strain ATCC 204508 / S288c) (Baker's yeast).